The following is a 294-amino-acid chain: Non-selective voltage-gated ion channel VDAC2 (294 aa).

Alanine 2 bears the N-acetylalanine mark. Residues lysine 23 and lysine 31 each coordinate ATP. At lysine 31 the chain carries N6-acetyllysine; alternate. Position 31 is an N6-succinyllysine; alternate (lysine 31). A Glycyl lysine isopeptide (Lys-Gly) (interchain with G-Cter in ubiquitin); alternate cross-link involves residue lysine 31. The next 2 beta stranded transmembrane spans lie at 37 to 46 (LVKLDVKTKS) and 50 to 58 (VEFSTSGSS). Residue lysine 64 forms a Glycyl lysine isopeptide (Lys-Gly) (interchain with G-Cter in ubiquitin) linkage. Residues 65–75 (VTGTLETKYKW) form a beta stranded membrane-spanning segment. Position 78 is a phosphotyrosine (tyrosine 78). 3 beta stranded membrane-spanning segments follow: residues 80 to 87 (LTFTEKWN), 91 to 100 (TLGTEIAIED), and 106 to 115 (LKLTFDTTFS). Threonine 118 bears the Phosphothreonine mark. Lysine 120 carries the N6-acetyllysine; alternate modification. A Glycyl lysine isopeptide (Lys-Gly) (interchain with G-Cter in ubiquitin); alternate cross-link involves residue lysine 120. A Glycyl lysine isopeptide (Lys-Gly) (interchain with G-Cter in ubiquitin) cross-link involves residue lysine 121. 4 beta stranded membrane-spanning segments follow: residues 122–131 (SGKIKSSYKR), 134–141 (INLGCDVD), 148–156 (AIHGSAVFG), and 161–169 (LAGYQMTFD). A Glycyl lysine isopeptide (Lys-Gly) (interchain with G-Cter in ubiquitin) cross-link involves residue lysine 172. The next 6 beta stranded transmembrane spans lie at 174 to 186 (KLTRNNFAVGYRT), 189 to 196 (FQLHTNVN), 200 to 209 (EFGGSIYQKV), 213 to 222 (LDTSVNLAWT), 229 to 238 (RFGIAAKYQL), and 242 to 249 (ASISAKVN). Position 251 is a phosphoserine (serine 251). Residues 253–255 (LIG) and 271–275 (SALVD) contribute to the NAD(+) site. Transmembrane regions (beta stranded) follow at residues 253-262 (LIGVGYTQTL) and 265-274 (GVKLTLSALV). An N6-acetyllysine; alternate modification is found at lysine 277. Lysine 277 participates in a covalent cross-link: Glycyl lysine isopeptide (Lys-Gly) (interchain with G-Cter in ubiquitin); alternate. Residues 284–293 (HKLGLALELE) traverse the membrane as a beta stranded segment.

This sequence belongs to the eukaryotic mitochondrial porin family. In terms of assembly, monomer, homodimer and higher order oligomers; formation of higher order structures is necessary for scramblase activity. Interacts with ARMC12 in a TBC1D21-dependent manner. Interacts with KLC3. Interacts with SPATA33. Interacts with PPP3CC in a SPATA33-dependent manner. In terms of processing, ubiquitinated by PRKN during mitophagy, leading to its degradation and enhancement of mitophagy. Deubiquitinated by USP30.

The protein resides in the mitochondrion outer membrane. Its subcellular location is the membrane. It carries out the reaction chloride(in) = chloride(out). The catalysed reaction is K(+)(in) = K(+)(out). It catalyses the reaction a 1,2-diacyl-sn-glycero-3-phospho-L-serine(in) = a 1,2-diacyl-sn-glycero-3-phospho-L-serine(out). The enzyme catalyses a 1,2-diacyl-sn-glycero-3-phosphocholine(in) = a 1,2-diacyl-sn-glycero-3-phosphocholine(out). It carries out the reaction a 1,2-diacyl-sn-glycero-3-phospho-(1D-myo-inositol)(in) = a 1,2-diacyl-sn-glycero-3-phospho-(1D-myo-inositol)(out). In terms of biological role, non-selective voltage-gated ion channel that mediates the transport of anions and cations through the mitochondrion outer membrane and plasma membrane. The channel adopts an open conformation at zero mV and a closed conformation at both positive and negative potentials. There are two populations of channels; the main that functions in a lower open-state conductance with lower ion selectivity, that switch, in a voltage-dependent manner, from the open to a low-conducting 'closed' state and the other that has a normal ion selectivity in the typical high conductance, 'open' state. Binds various lipids, including the sphingolipid ceramide, the phospholipid phosphatidylcholine, and the sterols cholesterol and oxysterol. Binding of ceramide promotes the mitochondrial outer membrane permeabilization (MOMP) apoptotic pathway. Its function is as follows. Catalyzes the scrambling of phospholipids across the outer mitochondrial membrane; the mechanism is unrelated to channel activity and is capable of translocating both anionic and zwitterionic phospholipids. This is Non-selective voltage-gated ion channel VDAC2 from Bos taurus (Bovine).